Reading from the N-terminus, the 172-residue chain is MKKIVLVGYMASGKTEIGKLLSKKVNLPFLDIDYLIEESLSKTVNEIFEEKGEVFFRKKEHEVFKNKINSKQSFILSLGGGTPCYAENHLFLQKDDVISIYLKGSVATLVDRLKMNKDKRPLLKNLANDELAEFVAKHLFDRNFYYSHCKYTIIIDDKSPFDIVEEIHKILF.

11–16 (ASGKTE) provides a ligand contact to ATP. Position 15 (threonine 15) interacts with Mg(2+). Positions 33, 57, and 80 each coordinate substrate. Residue arginine 120 participates in ATP binding. Arginine 142 serves as a coordination point for substrate.

It belongs to the shikimate kinase family. Monomer. Mg(2+) is required as a cofactor.

It is found in the cytoplasm. The catalysed reaction is shikimate + ATP = 3-phosphoshikimate + ADP + H(+). It participates in metabolic intermediate biosynthesis; chorismate biosynthesis; chorismate from D-erythrose 4-phosphate and phosphoenolpyruvate: step 5/7. In terms of biological role, catalyzes the specific phosphorylation of the 3-hydroxyl group of shikimic acid using ATP as a cosubstrate. The sequence is that of Shikimate kinase from Flavobacterium psychrophilum (strain ATCC 49511 / DSM 21280 / CIP 103535 / JIP02/86).